The sequence spans 292 residues: Ribosomal RNA small subunit methyltransferase A (292 aa).

S-adenosyl-L-methionine contacts are provided by N29, L31, G56, E77, D102, and N127.

It belongs to the class I-like SAM-binding methyltransferase superfamily. rRNA adenine N(6)-methyltransferase family. RsmA subfamily.

The protein localises to the cytoplasm. The enzyme catalyses adenosine(1518)/adenosine(1519) in 16S rRNA + 4 S-adenosyl-L-methionine = N(6)-dimethyladenosine(1518)/N(6)-dimethyladenosine(1519) in 16S rRNA + 4 S-adenosyl-L-homocysteine + 4 H(+). Its function is as follows. Specifically dimethylates two adjacent adenosines (A1518 and A1519) in the loop of a conserved hairpin near the 3'-end of 16S rRNA in the 30S particle. May play a critical role in biogenesis of 30S subunits. This Bacillus subtilis (strain 168) protein is Ribosomal RNA small subunit methyltransferase A.